The primary structure comprises 321 residues: UDP-N-acetylenolpyruvoylglucosamine reductase (321 aa).

The 167-residue stretch at R39 to G205 folds into the FAD-binding PCMH-type domain. The active site involves R185. The active-site Proton donor is the S234. E304 is an active-site residue.

The protein belongs to the MurB family. The cofactor is FAD.

It localises to the cytoplasm. The enzyme catalyses UDP-N-acetyl-alpha-D-muramate + NADP(+) = UDP-N-acetyl-3-O-(1-carboxyvinyl)-alpha-D-glucosamine + NADPH + H(+). It functions in the pathway cell wall biogenesis; peptidoglycan biosynthesis. Cell wall formation. The polypeptide is UDP-N-acetylenolpyruvoylglucosamine reductase (Bartonella quintana (strain Toulouse) (Rochalimaea quintana)).